Here is a 204-residue protein sequence, read N- to C-terminus: Holliday junction branch migration complex subunit RuvA (204 aa).

A domain I region spans residues 1 to 64 (MIGKLKGTLE…EEAIRLFGFA (64 aa)). A domain II region spans residues 65–143 (TRAEQEWFCM…PFEQAVKTVS (79 aa)). A flexible linker region spans residues 144–154 (VPQREITHQPA). The domain III stretch occupies residues 154–204 (AHDALSALMKLGFEREQAARALALAMNALEGEAVSSALLIRHSLKLLSSPT).

It belongs to the RuvA family. In terms of assembly, homotetramer. Forms an RuvA(8)-RuvB(12)-Holliday junction (HJ) complex. HJ DNA is sandwiched between 2 RuvA tetramers; dsDNA enters through RuvA and exits via RuvB. An RuvB hexamer assembles on each DNA strand where it exits the tetramer. Each RuvB hexamer is contacted by two RuvA subunits (via domain III) on 2 adjacent RuvB subunits; this complex drives branch migration. In the full resolvosome a probable DNA-RuvA(4)-RuvB(12)-RuvC(2) complex forms which resolves the HJ.

Its subcellular location is the cytoplasm. Functionally, the RuvA-RuvB-RuvC complex processes Holliday junction (HJ) DNA during genetic recombination and DNA repair, while the RuvA-RuvB complex plays an important role in the rescue of blocked DNA replication forks via replication fork reversal (RFR). RuvA specifically binds to HJ cruciform DNA, conferring on it an open structure. The RuvB hexamer acts as an ATP-dependent pump, pulling dsDNA into and through the RuvAB complex. HJ branch migration allows RuvC to scan DNA until it finds its consensus sequence, where it cleaves and resolves the cruciform DNA. This chain is Holliday junction branch migration complex subunit RuvA, found in Bartonella tribocorum (strain CIP 105476 / IBS 506).